Reading from the N-terminus, the 596-residue chain is Aspartate--tRNA(Asp/Asn) ligase (596 aa).

E169 provides a ligand contact to L-aspartate. Residues Q193 to K196 form an aspartate region. Residue R215 coordinates L-aspartate. ATP-binding positions include R215 to E217 and Q224. H447 provides a ligand contact to L-aspartate. E481 contacts ATP. R488 provides a ligand contact to L-aspartate. Residue G533–R536 participates in ATP binding. Positions G559–A596 are disordered. Residues Q574–D590 are compositionally biased toward basic and acidic residues.

This sequence belongs to the class-II aminoacyl-tRNA synthetase family. Type 1 subfamily. Homodimer.

The protein localises to the cytoplasm. The enzyme catalyses tRNA(Asx) + L-aspartate + ATP = L-aspartyl-tRNA(Asx) + AMP + diphosphate. Functionally, aspartyl-tRNA synthetase with relaxed tRNA specificity since it is able to aspartylate not only its cognate tRNA(Asp) but also tRNA(Asn). Reaction proceeds in two steps: L-aspartate is first activated by ATP to form Asp-AMP and then transferred to the acceptor end of tRNA(Asp/Asn). This is Aspartate--tRNA(Asp/Asn) ligase from Arthrobacter sp. (strain FB24).